The primary structure comprises 69 residues: Pleurain-A1 (69 aa).

The signal sequence occupies residues 1 to 18 (MFTLKKTLLLLFFLGTIS). The propeptide occupies 19–43 (ISLCKQERDADEDDGRKMTEEEVKR). Residues cysteine 63 and cysteine 69 are joined by a disulfide bond.

In terms of tissue distribution, expressed by the skin glands.

Its subcellular location is the secreted. In terms of biological role, antimicrobial peptide. Has activity against the Gram-positive bacterium S.aureus ATCC2592 (MIC=15 ug/ml), the Gram-negative bacteria E.coli ATCC25922 (MIC=60 ug/ml), B.dysenteriae (MIC=120 ug/ml), H.pylori NTCT11637 (MIC=30 ug/ml), and the fungus C.albicans ATCC2002 (MIC=30 ug/ml). Has little hemolytic activity on rabbit red blood cells. The polypeptide is Pleurain-A1 (Nidirana pleuraden (Yunnan pond frog)).